We begin with the raw amino-acid sequence, 766 residues long: Dolichyl pyrophosphate Glc1Man9GlcNAc2 alpha-1,3-glucosyltransferase (766 aa).

12 helical membrane-spanning segments follow: residues 6-26 (LVLAVTAILISFKCLLIPAYV), 60-80 (YPPFFAYFELGLASVAHFFGF), 96-116 (ILIFQRFSVIFCDILYIAVCA), 156-176 (SIHFQYNSMLTAIFLMSLFFI), 190-210 (ILLNFKHIYVYYALGYVFYYL), 228-248 (AISLAIALLIPFCASIFPFIH), 324-344 (PMGTLCLVVISSMIVLTGLVI), 350-370 (ADFSLFAVFSAFCFFYFGYHV), 395-415 (ILIHLTCIASFSLFPLLFTPF), 423-443 (ICVSYFFIQLVFLKRVTLMPL), 452-472 (VASWLLMGMVEVYNTFLHKWL), and 482-502 (LMAISILTAIELTGLIGALIW).

It belongs to the ALG6/ALG8 glucosyltransferase family.

Its subcellular location is the endoplasmic reticulum membrane. It carries out the reaction an alpha-D-Glc-(1-&gt;3)-alpha-D-Man-(1-&gt;2)-alpha-D-Man-(1-&gt;2)-alpha-D-Man-(1-&gt;3)-[alpha-D-Man-(1-&gt;2)-alpha-D-Man-(1-&gt;3)-[alpha-D-Man-(1-&gt;2)-alpha-D-Man-(1-&gt;6)]-alpha-D-Man-(1-&gt;6)]-beta-D-Man-(1-&gt;4)-beta-D-GlcNAc-(1-&gt;4)-alpha-D-GlcNAc-diphospho-di-trans,poly-cis-dolichol + a di-trans,poly-cis-dolichyl beta-D-glucosyl phosphate = an alpha-D-Glc-(1-&gt;3)-alpha-D-Glc-(1-&gt;3)-alpha-D-Man-(1-&gt;2)-alpha-D-Man-(1-&gt;2)-alpha-D-Man-(1-&gt;3)-[alpha-D-Man-(1-&gt;2)-alpha-D-Man-(1-&gt;3)-[alpha-D-Man-(1-&gt;2)-alpha-D-Man-(1-&gt;6)]-alpha-D-Man-(1-&gt;6)]-beta-D-Man-(1-&gt;4)-beta-D-GlcNAc-(1-&gt;4)-alpha-D-GlcNAc-diphospho-di-trans,poly-cis-dolichol + a di-trans,poly-cis-dolichyl phosphate + H(+). It participates in protein modification; protein glycosylation. In terms of biological role, dolichyl pyrophosphate Glc1Man9GlcNAc2 alpha-1,3-glucosyltransferase that operates in the biosynthetic pathway of dolichol-linked oligosaccharides, the glycan precursors employed in protein asparagine (N)-glycosylation. The assembly of dolichol-linked oligosaccharides begins on the cytosolic side of the endoplasmic reticulum membrane and finishes in its lumen. The sequential addition of sugars to dolichol pyrophosphate produces dolichol-linked oligosaccharides containing fourteen sugars, including two GlcNAcs, nine mannoses and three glucoses. Once assembled, the oligosaccharide is transferred from the lipid to nascent proteins by oligosaccharyltransferases. In the lumen of the endoplasmic reticulum, adds the second glucose residue from dolichyl phosphate glucose (Dol-P-Glc) onto the lipid-linked oligosaccharide intermediate Glc(1)Man(9)GlcNAc(2)-PP-Dol to produce Glc(2)Man(9)GlcNAc(2)-PP-Dol. The protein is Dolichyl pyrophosphate Glc1Man9GlcNAc2 alpha-1,3-glucosyltransferase of Caenorhabditis elegans.